The primary structure comprises 182 residues: Nascent polypeptide-associated complex subunit alpha (182 aa).

The NAC-A/B domain occupies 17–81 (NKNEKKAKEL…AKVDDMNQRI (65 aa)). A disordered region spans residues 120–148 (ASLQGGESNADAAEDDNEEVDETGINPKD). The segment covering 131-141 (AAEDDNEEVDE) has biased composition (acidic residues). The UBA domain maps to 144–182 (INPKDIDLIVEQTRVSRGSAVKALKKHDGDMVNALMELS).

Belongs to the NAC-alpha family. Part of the nascent polypeptide-associated complex (NAC), consisting of EGD2 and EGD1. NAC associates with ribosomes via EGD1.

It localises to the cytoplasm. The protein localises to the nucleus. Component of the nascent polypeptide-associated complex (NAC), a dynamic component of the ribosomal exit tunnel, protecting the emerging polypeptides from interaction with other cytoplasmic proteins to ensure appropriate nascent protein targeting. The NAC complex also promotes mitochondrial protein import by enhancing productive ribosome interactions with the outer mitochondrial membrane and blocks the inappropriate interaction of ribosomes translating non-secretory nascent polypeptides with translocation sites in the membrane of the endoplasmic reticulum. EGD2 may also be involved in transcription regulation. The sequence is that of Nascent polypeptide-associated complex subunit alpha (EGD2) from Lodderomyces elongisporus (strain ATCC 11503 / CBS 2605 / JCM 1781 / NBRC 1676 / NRRL YB-4239) (Yeast).